Consider the following 100-residue polypeptide: Osteocalcin (100 aa).

A signal peptide spans 1–23; sequence MRALTLLALLALATLCITGQAGA. Residues 24-51 constitute a propeptide that is removed on maturation; that stretch reads KPSGAESSKGAAFVSKQEGSEVVKRPRR. The 47-residue stretch at 52–98 folds into the Gla domain; sequence YLYQWLGAPAPYPDPLEPKREVCELNPDCDELADHIGFQEAYRRFYG. The residue at position 60 (P60) is a 4-hydroxyproline. Ca(2+)-binding residues include E68, E72, E75, and D81. A 4-carboxyglutamate mark is found at E68, E72, and E75. A disulfide bond links C74 and C80.

It belongs to the osteocalcin/matrix Gla protein family. Gamma-carboxyglutamate residues are formed by vitamin K dependent carboxylation by GGCX. These residues are essential for the binding of calcium. Decarboxylation promotes the hormone activity.

The protein resides in the secreted. Functionally, the carboxylated form is one of the main organic components of the bone matrix, which constitutes 1-2% of the total bone protein: it acts as a negative regulator of bone formation and is required to limit bone formation without impairing bone resorption or mineralization. The carboxylated form binds strongly to apatite and calcium. The uncarboxylated form acts as a hormone secreted by osteoblasts, which regulates different cellular processes, such as energy metabolism, male fertility and brain development. Regulates of energy metabolism by acting as a hormone favoring pancreatic beta-cell proliferation, insulin secretion and sensitivity and energy expenditure. Uncarboxylated osteocalcin hormone also promotes testosterone production in the testes: acts as a ligand for G protein-coupled receptor GPRC6A at the surface of Leydig cells, initiating a signaling response that promotes the expression of enzymes required for testosterone synthesis in a CREB-dependent manner. Also acts as a regulator of brain development: osteocalcin hormone crosses the blood-brain barrier and acts as a ligand for GPR158 on neurons, initiating a signaling response that prevents neuronal apoptosis in the hippocampus, favors the synthesis of all monoamine neurotransmitters and inhibits that of gamma-aminobutyric acid (GABA). Osteocalcin also crosses the placenta during pregnancy and maternal osteocalcin is required for fetal brain development. In Macaca mulatta (Rhesus macaque), this protein is Osteocalcin (BGLAP).